A 92-amino-acid chain; its full sequence is Protein S100-B (92 aa).

Serine 2 is subject to Blocked amino end (Ser); alternate. At serine 2 the chain carries N-acetylserine; alternate. EF-hand domains are found at residues aspartate 13 to isoleucine 48 and lysine 49 to alanine 84. Position 16 (histidine 16) interacts with Zn(2+). Positions 19, 22, and 24 each coordinate Ca(2+). Histidine 26 is a binding site for Zn(2+). The Ca(2+) site is built by lysine 27, glutamate 32, aspartate 62, aspartate 64, aspartate 66, glutamate 68, and glutamate 73. Residues histidine 86 and histidine 91 each coordinate Zn(2+).

Belongs to the S-100 family. As to quaternary structure, dimer of either two alpha chains, or two beta chains, or one alpha and one beta chain. The S100B dimer binds two molecules of STK38. Interacts with CACYBP in a calcium-dependent manner. Interacts with ATAD3A; this interaction probably occurs in the cytosol prior to ATAD3A mitochondrial targeting. Interacts with S100A6. The S100B dimer interacts with two molecules of CAPZA1. Interacts with AGER. Interacts with PPP5C (via TPR repeats); the interaction is calcium-dependent and modulates PPP5C activity. Interacts with TPPP; this interaction inhibits TPPP dimerization. Interacts with isoform CLSTN3beta of CLSTN3; interaction promotes secretion. In terms of tissue distribution, although predominant among the water-soluble brain proteins, S100 is also found in a variety of other tissues.

The protein resides in the cytoplasm. It is found in the nucleus. The protein localises to the secreted. Functionally, small zinc- and- and calcium-binding protein that is highly expressed in astrocytes and constitutes one of the most abundant soluble proteins in brain. Weakly binds calcium but binds zinc very tightly-distinct binding sites with different affinities exist for both ions on each monomer. Physiological concentrations of potassium ion antagonize the binding of both divalent cations, especially affecting high-affinity calcium-binding sites. Acts as a neurotrophic factor that promotes astrocytosis and axonal proliferation. Involved in innervation of thermogenic adipose tissue by acting as an adipocyte-derived neurotrophic factor that promotes sympathetic innervation of adipose tissue. Binds to and initiates the activation of STK38 by releasing autoinhibitory intramolecular interactions within the kinase. Interaction with AGER after myocardial infarction may play a role in myocyte apoptosis by activating ERK1/2 and p53/TP53 signaling. Could assist ATAD3A cytoplasmic processing, preventing aggregation and favoring mitochondrial localization. May mediate calcium-dependent regulation on many physiological processes by interacting with other proteins, such as TPR-containing proteins, and modulating their activity. In Homo sapiens (Human), this protein is Protein S100-B.